The primary structure comprises 627 residues: tRNA uridine 5-carboxymethylaminomethyl modification enzyme MnmG (627 aa).

FAD-binding positions include 13-18, Val125, and Ser180; that span reads GGGHAG. 274 to 288 is a binding site for NAD(+); the sequence is GPRYCPSIEDKVVRF. Residue Gln371 coordinates FAD.

Belongs to the MnmG family. In terms of assembly, homodimer. Heterotetramer of two MnmE and two MnmG subunits. FAD is required as a cofactor.

The protein localises to the cytoplasm. Its function is as follows. NAD-binding protein involved in the addition of a carboxymethylaminomethyl (cmnm) group at the wobble position (U34) of certain tRNAs, forming tRNA-cmnm(5)s(2)U34. This is tRNA uridine 5-carboxymethylaminomethyl modification enzyme MnmG from Francisella tularensis subsp. holarctica (strain FTNF002-00 / FTA).